The primary structure comprises 185 residues: MISAGDLRKGVTFEFDGQVFTVTDFLHVKPGKGAAFVRTKLRNVISGGVVDRTFNPTEKLQEAVIERKEMQYLYSDGELYYFMDQETFEQIPLNAEKVEDAIKYLKENMFAVIKFFKGSAFSVEAPNFVELQITYTEPGVKGNTATNSLKPATVETGAIINVPMFVNDGDVIRIDTRTGEYMERV.

The protein belongs to the elongation factor P family.

The protein resides in the cytoplasm. It functions in the pathway protein biosynthesis; polypeptide chain elongation. Involved in peptide bond synthesis. Stimulates efficient translation and peptide-bond synthesis on native or reconstituted 70S ribosomes in vitro. Probably functions indirectly by altering the affinity of the ribosome for aminoacyl-tRNA, thus increasing their reactivity as acceptors for peptidyl transferase. The polypeptide is Elongation factor P (Clostridium botulinum (strain Alaska E43 / Type E3)).